A 25-amino-acid polypeptide reads, in one-letter code: Metallothionein (25 aa).

Residues Cys-3, Cys-5, Cys-11, Cys-13, Cys-18, Cys-20, and Cys-23 each coordinate Cu(+).

The protein belongs to the metallothionein superfamily. Type 8 family.

Functionally, the metallothioneins are involved in the cellular sequestration of toxic metal ions. Binds six copper (cuprous) ions. The polypeptide is Metallothionein (Agaricus bisporus (White button mushroom)).